Reading from the N-terminus, the 336-residue chain is MIKIAINGYGRIGRNVLRALYESGRDKNIKIVAINELAAPEAMVHLTRFDTSHGRFRYPVQLAGHSMLVGEDLISLFAEQDPANLPWRALGVDVVLDCTGVFGSRADAELHLGAGAGKVLFSHPADADVDATIVYGVNHQVLTGRERIVSNASCTTNCVVPVIETLHREFEINCGTITTIHSAMHDQQVIDAYHSDLRRTRAASQSIIPVDTKLAKGLERILPHFAGKFEAIAVRVPTINVTAMDLSITVRKKVTVTDVNQALQRASRGTLSGILDYTEEPLVSVDFNHDAHSCIIDGTQTRVSDANLVKMLMWCDNEWGFANRMLDTTRAMMAAG.

11–12 (RI) serves as a coordination point for NAD(+). Residues 153 to 155 (SCT), Arg199, 212 to 213 (TK), and Arg235 each bind substrate. Cys154 acts as the Nucleophile in catalysis. Asn317 is a binding site for NAD(+).

Belongs to the glyceraldehyde-3-phosphate dehydrogenase family. Epd subfamily. As to quaternary structure, homotetramer.

The protein localises to the cytoplasm. It carries out the reaction D-erythrose 4-phosphate + NAD(+) + H2O = 4-phospho-D-erythronate + NADH + 2 H(+). It functions in the pathway cofactor biosynthesis; pyridoxine 5'-phosphate biosynthesis; pyridoxine 5'-phosphate from D-erythrose 4-phosphate: step 1/5. Catalyzes the NAD-dependent conversion of D-erythrose 4-phosphate to 4-phosphoerythronate. This chain is D-erythrose-4-phosphate dehydrogenase, found in Aeromonas salmonicida (strain A449).